A 338-amino-acid chain; its full sequence is Glyceraldehyde-3-phosphate dehydrogenase (338 aa).

NAD(+) contacts are provided by residues 13 to 14, D35, and R80; that span reads RI. D-glyceraldehyde 3-phosphate is bound by residues 151–153, T182, 211–212, and R234; these read SCT and TG. Residue C152 is the Nucleophile of the active site. N316 provides a ligand contact to NAD(+).

The protein belongs to the glyceraldehyde-3-phosphate dehydrogenase family. As to quaternary structure, homotetramer.

The protein localises to the cytoplasm. It carries out the reaction D-glyceraldehyde 3-phosphate + phosphate + NAD(+) = (2R)-3-phospho-glyceroyl phosphate + NADH + H(+). The protein operates within carbohydrate degradation; glycolysis; pyruvate from D-glyceraldehyde 3-phosphate: step 1/5. This is Glyceraldehyde-3-phosphate dehydrogenase (GPDA) from Colletotrichum gloeosporioides (Anthracnose fungus).